Consider the following 407-residue polypeptide: Snake venom metalloproteinase ACLH (407 aa).

A signal peptide spans 1–20 (MIQVLLVTLCLAAFPYQGSS). Residues 21–187 (IILESGNVND…PIKKASQLNL (167 aa)) constitute a propeptide that is removed on maturation. The Peptidase M12B domain maps to 193–389 (RYVELVTVVD…ENPQCILNKP (197 aa)). Residues Glu-196 and Asp-280 each coordinate Ca(2+). 3 cysteine pairs are disulfide-bonded: Cys-304–Cys-384, Cys-344–Cys-368, and Cys-346–Cys-351. His-329 lines the Zn(2+) pocket. Glu-330 is a catalytic residue. Zn(2+) is bound by residues His-333 and His-339. N-linked (GlcNAc...) asparagine glycosylation is present at Asn-367. Ca(2+) is bound by residues Cys-384 and Asn-387.

This sequence belongs to the venom metalloproteinase (M12B) family. P-I subfamily. In terms of assembly, monomer. Zn(2+) is required as a cofactor. Post-translationally, contains sialic acid terminally alpha(2-6)-linked to galactose in a complex N-glycan chain. As to expression, expressed by the venom gland.

It is found in the secreted. This zinc hemorrhagic metalloproteinase has fibrino(geno)lytic activities. It causes hemorrhage and has myonecrotic activity on both fiber types I and II. The recombinant enzyme, without post-translational modifications, also has proteolytic activity, but does not show any hemorrhagic activity. The polypeptide is Snake venom metalloproteinase ACLH (Agkistrodon contortrix laticinctus (Broad-banded copperhead)).